Reading from the N-terminus, the 400-residue chain is NADH-quinone oxidoreductase subunit D (400 aa).

This sequence belongs to the complex I 49 kDa subunit family. As to quaternary structure, NDH-1 is composed of 14 different subunits. Subunits NuoB, C, D, E, F, and G constitute the peripheral sector of the complex.

It localises to the cell inner membrane. The enzyme catalyses a quinone + NADH + 5 H(+)(in) = a quinol + NAD(+) + 4 H(+)(out). Functionally, NDH-1 shuttles electrons from NADH, via FMN and iron-sulfur (Fe-S) centers, to quinones in the respiratory chain. The immediate electron acceptor for the enzyme in this species is believed to be a menaquinone. Couples the redox reaction to proton translocation (for every two electrons transferred, four hydrogen ions are translocated across the cytoplasmic membrane), and thus conserves the redox energy in a proton gradient. The sequence is that of NADH-quinone oxidoreductase subunit D from Chlorobaculum parvum (strain DSM 263 / NCIMB 8327) (Chlorobium vibrioforme subsp. thiosulfatophilum).